The chain runs to 643 residues: Fructose-1,6-bisphosphatase class 3 (643 aa).

Belongs to the FBPase class 3 family. Mn(2+) is required as a cofactor.

The catalysed reaction is beta-D-fructose 1,6-bisphosphate + H2O = beta-D-fructose 6-phosphate + phosphate. The protein operates within carbohydrate biosynthesis; gluconeogenesis. This chain is Fructose-1,6-bisphosphatase class 3, found in Streptococcus agalactiae serotype Ia (strain ATCC 27591 / A909 / CDC SS700).